The following is a 205-amino-acid chain: Sarcosine oxidase subunit gamma (205 aa).

It belongs to the SoxG family. In terms of assembly, heterotetramer composed of subunits alpha (SoxA), beta (SoxB), gamma (SoxG) and delta (SoxD).

It is found in the cytoplasm. It carries out the reaction sarcosine + (6S)-5,6,7,8-tetrahydrofolate + O2 = (6R)-5,10-methylene-5,6,7,8-tetrahydrofolate + glycine + H2O2. The catalysed reaction is sarcosine + O2 + H2O = formaldehyde + glycine + H2O2. Its activity is regulated as follows. Inhibited by Zn(2+), Cu(2+), Cd(2+), Hg(2+), Ag(+), p-chloromercuribenzoate (p-CMB), iodoacetamide, N-ethylmaleimide, CN(-), o-phenanthroline and sodium lauryl sulfate. In terms of biological role, in the presence of tetrahydrofolate, catalyzes the oxidative demethylation of sarcosine to yield glycine, 5,10-methylenetetrahydrofolate and hydrogen peroxide. In the absence of tetrahydrofolate, catalyzes the oxidative demethylation of sarcosine to yield glycine, formaldehyde and hydrogen peroxide. Can also use N-methyl-L-alanine and N-ethyl-L-glycine. Is very specific for oxygen as an acceptor. In Corynebacterium sp. (strain U-96), this protein is Sarcosine oxidase subunit gamma.